Here is a 257-residue protein sequence, read N- to C-terminus: 6-phosphogluconolactonase (257 aa).

A2 is modified (N-acetylalanine). S49 is modified (phosphoserine). Position 180 is an N6-acetyllysine (K180).

Belongs to the glucosamine/galactosamine-6-phosphate isomerase family. 6-phosphogluconolactonase subfamily.

The protein localises to the cytoplasm. The enzyme catalyses 6-phospho-D-glucono-1,5-lactone + H2O = 6-phospho-D-gluconate + H(+). Its pathway is carbohydrate degradation; pentose phosphate pathway; D-ribulose 5-phosphate from D-glucose 6-phosphate (oxidative stage): step 2/3. Hydrolysis of 6-phosphogluconolactone to 6-phosphogluconate. The sequence is that of 6-phosphogluconolactonase from Rattus norvegicus (Rat).